The primary structure comprises 96 residues: Nucleoid-associated protein CT_335 (96 aa).

It belongs to the YbaB/EbfC family. In terms of assembly, homodimer.

The protein resides in the cytoplasm. It localises to the nucleoid. Its function is as follows. Binds to DNA and alters its conformation. May be involved in regulation of gene expression, nucleoid organization and DNA protection. The protein is Nucleoid-associated protein CT_335 of Chlamydia trachomatis serovar D (strain ATCC VR-885 / DSM 19411 / UW-3/Cx).